The primary structure comprises 310 residues: UDP-N-acetylenolpyruvoylglucosamine reductase (310 aa).

One can recognise an FAD-binding PCMH-type domain in the interval 23–188 (KVGGNAEIFF…LKAVFKVNKG (166 aa)). Residue Arg-168 is part of the active site. The active-site Proton donor is Ser-217. The active site involves Glu-287.

The protein belongs to the MurB family. The cofactor is FAD.

It localises to the cytoplasm. The catalysed reaction is UDP-N-acetyl-alpha-D-muramate + NADP(+) = UDP-N-acetyl-3-O-(1-carboxyvinyl)-alpha-D-glucosamine + NADPH + H(+). It functions in the pathway cell wall biogenesis; peptidoglycan biosynthesis. Cell wall formation. This chain is UDP-N-acetylenolpyruvoylglucosamine reductase, found in Rickettsia bellii (strain OSU 85-389).